Consider the following 393-residue polypeptide: Riboflavin biosynthesis protein RibBA (393 aa).

A DHBP synthase region spans residues methionine 1–lysine 200. Residues arginine 27–glutamate 28, aspartate 32, arginine 139–threonine 143, and glutamate 163 contribute to the D-ribulose 5-phosphate site. Residue glutamate 28 coordinates Mg(2+). Histidine 142 serves as a coordination point for Mg(2+). Residues leucine 201–isoleucine 393 form a GTP cyclohydrolase II region. Position 249–253 (arginine 249–alanine 253) interacts with GTP. Positions 254, 265, and 267 each coordinate Zn(2+). GTP contacts are provided by residues glutamine 270, glutamate 291–arginine 293, and threonine 313. Aspartate 325 serves as the catalytic Proton acceptor; for GTP cyclohydrolase activity. The active-site Nucleophile; for GTP cyclohydrolase activity is arginine 327. GTP contacts are provided by serine 348 and lysine 353.

This sequence in the N-terminal section; belongs to the DHBP synthase family. It in the C-terminal section; belongs to the GTP cyclohydrolase II family. Mg(2+) is required as a cofactor. It depends on Mn(2+) as a cofactor. Requires Zn(2+) as cofactor.

It carries out the reaction D-ribulose 5-phosphate = (2S)-2-hydroxy-3-oxobutyl phosphate + formate + H(+). The catalysed reaction is GTP + 4 H2O = 2,5-diamino-6-hydroxy-4-(5-phosphoribosylamino)-pyrimidine + formate + 2 phosphate + 3 H(+). It participates in cofactor biosynthesis; riboflavin biosynthesis; 2-hydroxy-3-oxobutyl phosphate from D-ribulose 5-phosphate: step 1/1. Its pathway is cofactor biosynthesis; riboflavin biosynthesis; 5-amino-6-(D-ribitylamino)uracil from GTP: step 1/4. Catalyzes the conversion of D-ribulose 5-phosphate to formate and 3,4-dihydroxy-2-butanone 4-phosphate. In terms of biological role, catalyzes the conversion of GTP to 2,5-diamino-6-ribosylamino-4(3H)-pyrimidinone 5'-phosphate (DARP), formate and pyrophosphate. The protein is Riboflavin biosynthesis protein RibBA of Staphylococcus aureus (strain COL).